The chain runs to 490 residues: Probable cytosol aminopeptidase (490 aa).

Residues Lys257 and Asp262 each contribute to the Mn(2+) site. The active site involves Lys269. The Mn(2+) site is built by Asp281, Asp341, and Glu343. Residue Arg345 is part of the active site.

This sequence belongs to the peptidase M17 family. It depends on Mn(2+) as a cofactor.

The protein resides in the cytoplasm. It carries out the reaction Release of an N-terminal amino acid, Xaa-|-Yaa-, in which Xaa is preferably Leu, but may be other amino acids including Pro although not Arg or Lys, and Yaa may be Pro. Amino acid amides and methyl esters are also readily hydrolyzed, but rates on arylamides are exceedingly low.. It catalyses the reaction Release of an N-terminal amino acid, preferentially leucine, but not glutamic or aspartic acids.. Presumably involved in the processing and regular turnover of intracellular proteins. Catalyzes the removal of unsubstituted N-terminal amino acids from various peptides. In Prochlorococcus marinus (strain MIT 9215), this protein is Probable cytosol aminopeptidase.